The following is a 769-amino-acid chain: Sensor histidine kinase ComP (769 aa).

Residues 1–9 (MKNLIKKFT) lie on the Cytoplasmic side of the membrane. The chain crosses the membrane as a helical span at residues 10–33 (IAVIVLSILYISYTTYISMNGIII). The Extracellular segment spans residues 34–113 (GTKIHKNDKS…DFDLVTLNRP (80 aa)). Residues 114–134 (YSFFLFVLPLFFYFLSIICIF) traverse the membrane as a helical segment. Topologically, residues 135-144 (YILKVNKKRR) are cytoplasmic. The chain crosses the membrane as a helical span at residues 145-167 (SFAAYILILLLLDISIAYISAGG). Residues 168 to 235 (PFRGHIINRY…QDYLQVDIDF (68 aa)) are Extracellular-facing. Residues 236 to 257 (LATLNLVSFATLTLFSFSAIYL) traverse the membrane as a helical segment. The Cytoplasmic segment spans residues 258–272 (HLNKYKYAEHSFILK). A helical transmembrane segment spans residues 273–295 (LLILTNTLSFAPFLIFFVLPIIF). At 296-299 (TGNY) the chain is on the extracellular side. Residues 300–323 (IFPALASASLLVLIPFGLVYQFVA) traverse the membrane as a helical segment. Residues 324–337 (NKMFDIEFILGRMR) lie on the Cytoplasmic side of the membrane. Residues 338-357 (YYALLAMIPTLLIVGALVLF) form a helical membrane-spanning segment. Residues 358–361 (DVMD) lie on the Extracellular side of the membrane. Residues 362–383 (IQMNPVRQTVFFFVVMFAVFYF) traverse the membrane as a helical segment. At 384-769 (KEVMDFKFRL…GFKADIEIEL (386 aa)) the chain is on the cytoplasmic side. Residues 571-769 (LARDLHDSVL…GFKADIEIEL (199 aa)) enclose the Histidine kinase domain. Residue histidine 576 is modified to Phosphohistidine; by autocatalysis.

In terms of processing, autophosphorylates on a histidine and transfers the phosphate group onto an aspartate in ComA, thus activating it.

The protein resides in the cell membrane. The enzyme catalyses ATP + protein L-histidine = ADP + protein N-phospho-L-histidine.. Functionally, sensor in the two-component regulatory system ComP/ComA involved in a major quorum response pathway that regulates the development of genetic competence. Plays a role in sporulation, at least partly interchangeable with that of SpoIIJ. Probably activates ComA by phosphorylation. This Bacillus subtilis (strain 168) protein is Sensor histidine kinase ComP (comP).